The chain runs to 48 residues: Phosphatidylserine decarboxylase proenzyme (48 aa).

It belongs to the phosphatidylserine decarboxylase family. Type 1 subfamily. Pyruvate serves as cofactor.

The catalysed reaction is a 1,2-diacyl-sn-glycero-3-phospho-L-serine + H(+) = a 1,2-diacyl-sn-glycero-3-phosphoethanolamine + CO2. It participates in phospholipid metabolism; phosphatidylethanolamine biosynthesis; phosphatidylethanolamine from CDP-diacylglycerol: step 2/2. This is Phosphatidylserine decarboxylase proenzyme (psd) from Azotobacter vinelandii.